The sequence spans 311 residues: tRNA dimethylallyltransferase (311 aa).

13–20 serves as a coordination point for ATP; the sequence is GPTASGKT. 15–20 contacts substrate; that stretch reads TASGKT. 2 interaction with substrate tRNA regions span residues 38-41 and 166-170; these read DSMQ and QRGLR.

It belongs to the IPP transferase family. As to quaternary structure, monomer. Requires Mg(2+) as cofactor.

The enzyme catalyses adenosine(37) in tRNA + dimethylallyl diphosphate = N(6)-dimethylallyladenosine(37) in tRNA + diphosphate. Catalyzes the transfer of a dimethylallyl group onto the adenine at position 37 in tRNAs that read codons beginning with uridine, leading to the formation of N6-(dimethylallyl)adenosine (i(6)A). The sequence is that of tRNA dimethylallyltransferase from Staphylococcus aureus (strain MSSA476).